We begin with the raw amino-acid sequence, 130 residues long: C-X-C motif chemokine 5 (130 aa).

Residues 1–37 form the signal peptide; it reads MSFQLRSSARIPSRSCSSFTLLAFLLLFTLPQHRAQA. Cystine bridges form between C50/C76 and C52/C93.

The protein belongs to the intercrine alpha (chemokine CxC) family. As to quaternary structure, monomer. Homodimer.

It localises to the secreted. May participate in the recruitment of inflammatory cells by injured or infected tissue. The chain is C-X-C motif chemokine 5 (Cxcl5) from Rattus norvegicus (Rat).